A 539-amino-acid chain; its full sequence is Phosphoenolpyruvate carboxykinase (ATP) (539 aa).

The substrate site is built by Arg-64, Tyr-206, and Lys-212. ATP contacts are provided by residues Lys-212, His-231, and 247 to 255; that span reads GLSGTGKTT. Mn(2+) contacts are provided by Lys-212 and His-231. A Mn(2+)-binding site is contributed by Asp-268. Residues Glu-296, Arg-332, 448 to 449, and Thr-454 contribute to the ATP site; that span reads RI. Arg-332 is a binding site for substrate.

Belongs to the phosphoenolpyruvate carboxykinase (ATP) family. In terms of assembly, monomer. The cofactor is Mn(2+).

It localises to the cytoplasm. It carries out the reaction oxaloacetate + ATP = phosphoenolpyruvate + ADP + CO2. It participates in carbohydrate biosynthesis; gluconeogenesis. In terms of biological role, involved in the gluconeogenesis. Catalyzes the conversion of oxaloacetate (OAA) to phosphoenolpyruvate (PEP) through direct phosphoryl transfer between the nucleoside triphosphate and OAA. This Yersinia pseudotuberculosis serotype IB (strain PB1/+) protein is Phosphoenolpyruvate carboxykinase (ATP).